A 104-amino-acid polypeptide reads, in one-letter code: Large ribosomal subunit protein uL24 (104 aa).

Belongs to the universal ribosomal protein uL24 family. In terms of assembly, part of the 50S ribosomal subunit.

Functionally, one of two assembly initiator proteins, it binds directly to the 5'-end of the 23S rRNA, where it nucleates assembly of the 50S subunit. In terms of biological role, one of the proteins that surrounds the polypeptide exit tunnel on the outside of the subunit. In Shewanella sediminis (strain HAW-EB3), this protein is Large ribosomal subunit protein uL24.